An 803-amino-acid chain; its full sequence is Leucine--tRNA ligase (803 aa).

The short motif at 40 to 51 (PYPSGAGLHVGH) is the 'HIGH' region element. A 'KMSKS' region motif is present at residues 575 to 579 (KMSKS). Residue Lys-578 coordinates ATP.

The protein belongs to the class-I aminoacyl-tRNA synthetase family.

It is found in the cytoplasm. It carries out the reaction tRNA(Leu) + L-leucine + ATP = L-leucyl-tRNA(Leu) + AMP + diphosphate. The sequence is that of Leucine--tRNA ligase from Listeria monocytogenes serovar 1/2a (strain ATCC BAA-679 / EGD-e).